Here is a 601-residue protein sequence, read N- to C-terminus: Terpenoid synthase 17 (601 aa).

Mg(2+) contacts are provided by Asn-354, Asp-358, Asn-497, Thr-501, and Glu-505. Residues Asn-354–Asp-358 carry the DDXXD motif; degenerate motif.

The protein belongs to the terpene synthase family. Tpsa subfamily. Mg(2+) serves as cofactor. It depends on Mn(2+) as a cofactor. Expressed exclusively in flowers.

It localises to the cytoplasm. It functions in the pathway secondary metabolite biosynthesis; terpenoid biosynthesis. This Arabidopsis thaliana (Mouse-ear cress) protein is Terpenoid synthase 17 (TPS17).